Consider the following 197-residue polypeptide: Large ribosomal subunit protein uL10 (197 aa).

The tract at residues G162–N197 is disordered. The span at G163–N197 shows a compositional bias: low complexity.

It belongs to the universal ribosomal protein uL10 family. In terms of assembly, part of the ribosomal stalk of the 50S ribosomal subunit. The N-terminus interacts with L11 and the large rRNA to form the base of the stalk. The C-terminus forms an elongated spine to which L12 dimers bind in a sequential fashion forming a multimeric L10(L12)X complex.

Its function is as follows. Forms part of the ribosomal stalk, playing a central role in the interaction of the ribosome with GTP-bound translation factors. This Paenarthrobacter aurescens (strain TC1) protein is Large ribosomal subunit protein uL10.